Consider the following 209-residue polypeptide: Imidazole glycerol phosphate synthase subunit HisH (209 aa).

The 207-residue stretch at 3 to 209 folds into the Glutamine amidotransferase type-1 domain; that stretch reads SVAVIDYGMG…ANFLTWNGVS (207 aa). The Nucleophile role is filled by Cys-82. Catalysis depends on residues His-187 and Glu-189.

Heterodimer of HisH and HisF.

It is found in the cytoplasm. It catalyses the reaction 5-[(5-phospho-1-deoxy-D-ribulos-1-ylimino)methylamino]-1-(5-phospho-beta-D-ribosyl)imidazole-4-carboxamide + L-glutamine = D-erythro-1-(imidazol-4-yl)glycerol 3-phosphate + 5-amino-1-(5-phospho-beta-D-ribosyl)imidazole-4-carboxamide + L-glutamate + H(+). The enzyme catalyses L-glutamine + H2O = L-glutamate + NH4(+). It functions in the pathway amino-acid biosynthesis; L-histidine biosynthesis; L-histidine from 5-phospho-alpha-D-ribose 1-diphosphate: step 5/9. Its function is as follows. IGPS catalyzes the conversion of PRFAR and glutamine to IGP, AICAR and glutamate. The HisH subunit catalyzes the hydrolysis of glutamine to glutamate and ammonia as part of the synthesis of IGP and AICAR. The resulting ammonia molecule is channeled to the active site of HisF. The chain is Imidazole glycerol phosphate synthase subunit HisH from Nitrosococcus oceani (strain ATCC 19707 / BCRC 17464 / JCM 30415 / NCIMB 11848 / C-107).